A 119-amino-acid polypeptide reads, in one-letter code: Holo-[acyl-carrier-protein] synthase (119 aa).

Mg(2+) is bound by residues Asp-8 and Glu-58.

It belongs to the P-Pant transferase superfamily. AcpS family. It depends on Mg(2+) as a cofactor.

Its subcellular location is the cytoplasm. It catalyses the reaction apo-[ACP] + CoA = holo-[ACP] + adenosine 3',5'-bisphosphate + H(+). Its function is as follows. Transfers the 4'-phosphopantetheine moiety from coenzyme A to a Ser of acyl-carrier-protein. This chain is Holo-[acyl-carrier-protein] synthase, found in Oceanobacillus iheyensis (strain DSM 14371 / CIP 107618 / JCM 11309 / KCTC 3954 / HTE831).